The chain runs to 294 residues: UDP-3-O-acyl-N-acetylglucosamine deacetylase (294 aa).

Zn(2+) is bound by residues His75, His232, and Asp236. His259 functions as the Proton donor in the catalytic mechanism.

The protein belongs to the LpxC family. It depends on Zn(2+) as a cofactor.

The catalysed reaction is a UDP-3-O-[(3R)-3-hydroxyacyl]-N-acetyl-alpha-D-glucosamine + H2O = a UDP-3-O-[(3R)-3-hydroxyacyl]-alpha-D-glucosamine + acetate. The protein operates within glycolipid biosynthesis; lipid IV(A) biosynthesis; lipid IV(A) from (3R)-3-hydroxytetradecanoyl-[acyl-carrier-protein] and UDP-N-acetyl-alpha-D-glucosamine: step 2/6. Its function is as follows. Catalyzes the hydrolysis of UDP-3-O-myristoyl-N-acetylglucosamine to form UDP-3-O-myristoylglucosamine and acetate, the committed step in lipid A biosynthesis. The protein is UDP-3-O-acyl-N-acetylglucosamine deacetylase of Campylobacter jejuni subsp. doylei (strain ATCC BAA-1458 / RM4099 / 269.97).